Reading from the N-terminus, the 450-residue chain is Sorting nexin-4 (450 aa).

Methionine 1 is modified (N-acetylmethionine). Residues 1–46 (MEQAPPDPERQLQPAPLEPLGSPDAVLGAAVGKETEGAGEESSGVD) form a disordered region. Serine 22 carries the phosphoserine modification. The PX domain occupies 61–187 (SVSEAEKRTG…YLFLTQEGNW (127 aa)). A 1,2-diacyl-sn-glycero-3-phospho-(1D-myo-inositol-3-phosphate) is bound by residues arginine 106, serine 108, lysine 132, and arginine 154.

It belongs to the sorting nexin family. As to quaternary structure, heterodimer; heterodimerizes with SNX7 or SNX30. Interacts with WWC1/KIBRA. Identified in a complex with WWC1/KIBRA and dynein components DYNLL1 and DYNC1I2. Interacts with BIN1.

The protein localises to the early endosome. It localises to the early endosome membrane. Functionally, involved in the regulation of endocytosis and in several stages of intracellular trafficking. Plays a role in recycling endocytosed transferrin receptor and prevent its degradation. Involved in autophagosome assembly by regulating trafficking and recycling of phospholipid scramblase ATG9A. This Pongo abelii (Sumatran orangutan) protein is Sorting nexin-4.